A 394-amino-acid chain; its full sequence is Phosphoglycerate kinase (394 aa).

Residues 21 to 23 (DFN), R36, 59 to 62 (HLGR), R118, and R151 each bind substrate. Position 183 is a phosphoserine (S183). Residues K201 and G292 each coordinate ATP. T299 is modified (phosphothreonine). Residues E323 and 350-353 (GGDS) each bind ATP.

It belongs to the phosphoglycerate kinase family. Monomer.

The protein localises to the cytoplasm. The enzyme catalyses (2R)-3-phosphoglycerate + ATP = (2R)-3-phospho-glyceroyl phosphate + ADP. It functions in the pathway carbohydrate degradation; glycolysis; pyruvate from D-glyceraldehyde 3-phosphate: step 2/5. This chain is Phosphoglycerate kinase, found in Bacillus cereus (strain ZK / E33L).